The chain runs to 399 residues: Argininosuccinate synthase (399 aa).

ATP-binding positions include 10–18 (AYSGGVDTS) and Ala38. Tyr89 lines the L-citrulline pocket. Gly119 provides a ligand contact to ATP. L-aspartate is bound by residues Thr121, Asn125, and Asp126. Asn125 contributes to the L-citrulline binding site. Residues Arg129, Ser177, Ser186, Glu262, and Tyr274 each coordinate L-citrulline.

It belongs to the argininosuccinate synthase family. Type 1 subfamily. As to quaternary structure, homotetramer.

The protein localises to the cytoplasm. It catalyses the reaction L-citrulline + L-aspartate + ATP = 2-(N(omega)-L-arginino)succinate + AMP + diphosphate + H(+). Its pathway is amino-acid biosynthesis; L-arginine biosynthesis; L-arginine from L-ornithine and carbamoyl phosphate: step 2/3. This chain is Argininosuccinate synthase, found in Rippkaea orientalis (strain PCC 8801 / RF-1) (Cyanothece sp. (strain PCC 8801)).